The chain runs to 398 residues: Sex hormone-binding globulin (398 aa).

The N-terminal stretch at 1–31 (MATPPLVPLLLLLLLLLPHAHHRLALRSVLA) is a signal peptide. Laminin G-like domains follow at residues 41–213 (VHLI…RRSC) and 220–386 (GIFF…THSC). Disulfide bonds link Cys189–Cys213 and Cys358–Cys386. Asn376 and Asn392 each carry an N-linked (GlcNAc...) asparagine glycan.

In terms of assembly, homodimer.

The protein localises to the secreted. Functionally, functions as an androgen transport protein, but may also be involved in receptor mediated processes. Each dimer binds one molecule of steroid. Specific for 5-alpha-dihydrotestosterone, testosterone, and 17-beta-estradiol. Regulates the plasma metabolic clearance rate of steroid hormones by controlling their plasma concentration. The protein is Sex hormone-binding globulin (SHBG) of Oryctolagus cuniculus (Rabbit).